The sequence spans 143 residues: Holo-[acyl-carrier-protein] synthase (143 aa).

Positions 9 and 63 each coordinate Mg(2+).

The protein belongs to the P-Pant transferase superfamily. AcpS family. Mg(2+) serves as cofactor.

The protein resides in the cytoplasm. The catalysed reaction is apo-[ACP] + CoA = holo-[ACP] + adenosine 3',5'-bisphosphate + H(+). In terms of biological role, transfers the 4'-phosphopantetheine moiety from coenzyme A to a Ser of acyl-carrier-protein. The protein is Holo-[acyl-carrier-protein] synthase of Burkholderia mallei (strain NCTC 10247).